We begin with the raw amino-acid sequence, 115 residues long: Large ribosomal subunit protein bL19 (115 aa).

This sequence belongs to the bacterial ribosomal protein bL19 family.

Functionally, this protein is located at the 30S-50S ribosomal subunit interface and may play a role in the structure and function of the aminoacyl-tRNA binding site. The protein is Large ribosomal subunit protein bL19 of Buchnera aphidicola subsp. Acyrthosiphon pisum (strain Tuc7).